The sequence spans 580 residues: Probable mediator of RNA polymerase II transcription subunit 26a (580 aa).

The TFIIS N-terminal domain maps to 108–183; sequence DEVMRIRDIL…AEWKRLVDQW (76 aa). 3 stretches are compositionally biased toward basic and acidic residues: residues 244–255, 280–290, and 299–309; these read RHSVESKHERKS, QTRREEADVRP, and VEPKRQTKQSR. Residues 244-337 form a disordered region; that stretch reads RHSVESKHER…RKLAGPQQDK (94 aa). A coiled-coil region spans residues 347–368; sequence FEFAKRKLQESYHQHENAKRQR.

It belongs to the Mediator complex subunit 26 family. In terms of assembly, component of the Mediator complex.

It is found in the nucleus. Functionally, component of the Mediator complex, a coactivator involved in the regulated transcription of nearly all RNA polymerase II-dependent genes. Mediator functions as a bridge to convey information from gene-specific regulatory proteins to the basal RNA polymerase II transcription machinery. The Mediator complex, having a compact conformation in its free form, is recruited to promoters by direct interactions with regulatory proteins and serves for the assembly of a functional preinitiation complex with RNA polymerase II and the general transcription factors. May play a role in transcription elongation. This chain is Probable mediator of RNA polymerase II transcription subunit 26a (MED26A), found in Arabidopsis thaliana (Mouse-ear cress).